Here is a 521-residue protein sequence, read N- to C-terminus: uncharacterized protein (521 aa).

A disordered region spans residues 1–25 (MLQRSLGVNGRKLAMSARSAKRERK). The next 6 membrane-spanning stretches (helical) occupy residues 68-88 (GAVW…GAVL), 114-134 (VLIV…SLTV), 160-180 (VVLA…HTVG), 192-212 (VAVT…IYFL), 290-310 (ALLV…GWCW), and 399-419 (LLFW…CAQI).

The protein resides in the cell membrane. This is an uncharacterized protein from Mycobacterium bovis (strain ATCC BAA-935 / AF2122/97).